The primary structure comprises 421 residues: CinA-like protein (421 aa).

It belongs to the CinA family.

This Synechococcus sp. (strain ATCC 27144 / PCC 6301 / SAUG 1402/1) (Anacystis nidulans) protein is CinA-like protein.